A 343-amino-acid polypeptide reads, in one-letter code: MDIKQALKKLVASIDLSTEEMISVMRIVMTGGATPAQIGGFLVALRMKGETLDEITGAAMVMRELATPVNIDVDYLVDTCGTGGDGANLFNLSTASAFVVAAAGGRVAKHGNRSVSSSTGSADVLEAAGIKLDITAEQVARCVKEIGVGFMFAPSHHSAMKHAIGPRRELGMRTIFNMLGPLTNPANVKRQVIGVFNGELCKPMAEVLGRLGSEHVMVVHAKDGLDEISLATETQVAELKGGEIREYIIKPEDFGMQSKSLIGLSVSNAEDSLLLIRDALGNRRGQYAEKAADIIALNAGAAIYVSGVAGSLSDGVEMARDAIGSSLAGEKIRELAAFTQYLQ.

Residues Gly-81, 84-85 (GD), 91-94 (NLST), 109-117 (KHGNRSVSS), and Ser-121 each bind 5-phospho-alpha-D-ribose 1-diphosphate. Gly-81 serves as a coordination point for anthranilate. Position 93 (Ser-93) interacts with Mg(2+). Asn-112 lines the anthranilate pocket. An anthranilate-binding site is contributed by Arg-167. 2 residues coordinate Mg(2+): Asp-226 and Glu-227.

This sequence belongs to the anthranilate phosphoribosyltransferase family. Homodimer. It depends on Mg(2+) as a cofactor.

The catalysed reaction is N-(5-phospho-beta-D-ribosyl)anthranilate + diphosphate = 5-phospho-alpha-D-ribose 1-diphosphate + anthranilate. It functions in the pathway amino-acid biosynthesis; L-tryptophan biosynthesis; L-tryptophan from chorismate: step 2/5. Catalyzes the transfer of the phosphoribosyl group of 5-phosphorylribose-1-pyrophosphate (PRPP) to anthranilate to yield N-(5'-phosphoribosyl)-anthranilate (PRA). The sequence is that of Anthranilate phosphoribosyltransferase from Cellvibrio japonicus (strain Ueda107) (Pseudomonas fluorescens subsp. cellulosa).